A 196-amino-acid chain; its full sequence is Probable calcium-binding protein CML32 (196 aa).

3 EF-hand domains span residues 30 to 65, 121 to 156, and 159 to 194; these read LNAVRLRRVFDLFDRNGDGEITVDELAQALDALGLV, DEEEEMREAFKVFDVDGDGFISASELQEVLKKLGLP, and GSLATVREMICNVDRNSDGRVDFGEFKSMMQGITVW. D43, N45, D47, E49, E54, D134, D136, D138, E145, D172, N174, D176, R178, and E183 together coordinate Ca(2+).

In terms of biological role, potential calcium sensor. The protein is Probable calcium-binding protein CML32 (CML32) of Oryza sativa subsp. japonica (Rice).